Reading from the N-terminus, the 328-residue chain is Probable GDP-L-fucose synthase 1 (328 aa).

25 to 31 is an NADP(+) binding site; the sequence is GHRGLVG. Residue Tyr-152 is the Proton donor/acceptor of the active site. NADP(+) contacts are provided by residues Lys-156, 179-182, and His-195; that span reads PTNL. Residues Arg-203, Trp-218, Arg-225, and Asp-285 each coordinate substrate.

Belongs to the NAD(P)-dependent epimerase/dehydratase family. Fucose synthase subfamily. Homodimer.

It catalyses the reaction GDP-beta-L-fucose + NADP(+) = GDP-4-dehydro-alpha-D-rhamnose + NADPH + H(+). Its pathway is nucleotide-sugar biosynthesis; GDP-L-fucose biosynthesis via de novo pathway; GDP-L-fucose from GDP-alpha-D-mannose: step 2/2. Catalyzes the two-step NADP-dependent conversion of GDP-4-dehydro-6-deoxy-D-mannose to GDP-fucose, involving an epimerase and a reductase reaction. The polypeptide is Probable GDP-L-fucose synthase 1 (Oryza sativa subsp. japonica (Rice)).